Here is a 107-residue protein sequence, read N- to C-terminus: Guanine nucleotide-binding protein G(I)/G(S)/G(O) subunit gamma-14 (107 aa).

Residues 69-107 (KMAADLLKFCTEQAKNDPFLVGIPAATNSFKEKKPYAIL) enclose the G protein gamma domain.

Belongs to the G protein gamma family. G proteins are composed of 3 units; alpha, beta and gamma.

The protein resides in the cell membrane. Guanine nucleotide-binding proteins (G proteins) are involved as a modulator or transducer in various transmembrane signaling systems. The beta and gamma chains are required for the GTPase activity, for replacement of GDP by GTP, and for G protein-effector interaction. The chain is Guanine nucleotide-binding protein G(I)/G(S)/G(O) subunit gamma-14 from Homo sapiens (Human).